The primary structure comprises 549 residues: YTH domain-containing family protein 1 (549 aa).

Disordered regions lie at residues 29–102, 139–165, 243–262, 273–298, and 425–458; these read QAPW…QPNM, GHPP…RQSG, GASG…QQAV, DSTE…AKGP, and REDS…SENK. Positions 49 to 61 are enriched in polar residues; that stretch reads VVGQTQSSPQYNG. Positions 71 to 102 are enriched in low complexity; sequence QGYYMPQQQQQQQQMPQYYGGPMSPSQPQPNM. Composition is skewed to polar residues over residues 251 to 260 and 273 to 289; these read TGPSATTPQQ and DSTE…TPTA. The YTH domain maps to 307–513; it reads DRFFVLKSLT…SVGRRLIGLF (207 aa).

It belongs to the YTHDF family. YTHDF1 subfamily.

Its function is as follows. Specifically recognizes and binds N6-methyladenosine (m6A)-containing mRNAs, and regulates their stability. M6A is a modification present at internal sites of mRNAs and some non-coding RNAs and plays a role in mRNA stability and processing. Directly interacts with the acid phosphatase APHA mRNA to increase its stability. The chain is YTH domain-containing family protein 1 from Cryphonectria parasitica (strain ATCC 38755 / EP155).